We begin with the raw amino-acid sequence, 535 residues long: CTP synthase (535 aa).

Residues 1 to 267 (MTKYIFVTGG…DKLVCDHMKL (267 aa)) are amidoligase domain. Ser-13 serves as a coordination point for CTP. A UTP-binding site is contributed by Ser-13. Residue 14–19 (SLGKGI) coordinates ATP. Position 54 (Tyr-54) interacts with L-glutamine. An ATP-binding site is contributed by Asp-71. Asp-71 and Glu-141 together coordinate Mg(2+). CTP is bound by residues 148-150 (DIE), 188-193 (KTKPTQ), and Lys-224. UTP-binding positions include 188–193 (KTKPTQ) and Lys-224. A Glutamine amidotransferase type-1 domain is found at 292–534 (TISLVGKYVE…IGASVQAAEQ (243 aa)). Position 354 (Gly-354) interacts with L-glutamine. Catalysis depends on Cys-381, which acts as the Nucleophile; for glutamine hydrolysis. L-glutamine-binding positions include 382–385 (LGMQ), Glu-405, and Arg-462. Residues His-507 and Glu-509 contribute to the active site.

The protein belongs to the CTP synthase family. In terms of assembly, homotetramer.

The catalysed reaction is UTP + L-glutamine + ATP + H2O = CTP + L-glutamate + ADP + phosphate + 2 H(+). It carries out the reaction L-glutamine + H2O = L-glutamate + NH4(+). It catalyses the reaction UTP + NH4(+) + ATP = CTP + ADP + phosphate + 2 H(+). The protein operates within pyrimidine metabolism; CTP biosynthesis via de novo pathway; CTP from UDP: step 2/2. With respect to regulation, allosterically activated by GTP, when glutamine is the substrate; GTP has no effect on the reaction when ammonia is the substrate. The allosteric effector GTP functions by stabilizing the protein conformation that binds the tetrahedral intermediate(s) formed during glutamine hydrolysis. Inhibited by the product CTP, via allosteric rather than competitive inhibition. Its function is as follows. Catalyzes the ATP-dependent amination of UTP to CTP with either L-glutamine or ammonia as the source of nitrogen. Regulates intracellular CTP levels through interactions with the four ribonucleotide triphosphates. The chain is CTP synthase from Bacillus velezensis (strain DSM 23117 / BGSC 10A6 / LMG 26770 / FZB42) (Bacillus amyloliquefaciens subsp. plantarum).